Consider the following 277-residue polypeptide: Insertion element IS407 uncharacterized 31.7 kDa protein (277 aa).

One can recognise an Integrase catalytic domain in the interval 103–264; that stretch reads LPGAPNEVWS…APSEFAAKHR (162 aa).

This chain is Insertion element IS407 uncharacterized 31.7 kDa protein, found in Burkholderia multivorans (strain ATCC 17616 / 249).